The chain runs to 84 residues: Large ribosomal subunit protein bL27 (84 aa).

The interval 1-20 (MAHKKGGGSTKNGRDSNPKY) is disordered.

This sequence belongs to the bacterial ribosomal protein bL27 family.

The chain is Large ribosomal subunit protein bL27 from Chlorobaculum tepidum (strain ATCC 49652 / DSM 12025 / NBRC 103806 / TLS) (Chlorobium tepidum).